The primary structure comprises 198 residues: Nucleoid occlusion factor SlmA (198 aa).

Residues 10 to 70 enclose the HTH tetR-type domain; the sequence is NRREEILQSL…SLIEFIEDSL (61 aa). The H-T-H motif DNA-binding region spans 33–52; the sequence is TTAKLAASVGVSEAALYRHF. A coiled-coil region spans residues 117 to 144; sequence EQDRLQGRINQLFERIEAQLRQVLREKR.

Belongs to the nucleoid occlusion factor SlmA family. Homodimer. Interacts with FtsZ.

The protein localises to the cytoplasm. It localises to the nucleoid. Functionally, required for nucleoid occlusion (NO) phenomenon, which prevents Z-ring formation and cell division over the nucleoid. Acts as a DNA-associated cell division inhibitor that binds simultaneously chromosomal DNA and FtsZ, and disrupts the assembly of FtsZ polymers. SlmA-DNA-binding sequences (SBS) are dispersed on non-Ter regions of the chromosome, preventing FtsZ polymerization at these regions. The sequence is that of Nucleoid occlusion factor SlmA from Salmonella paratyphi A (strain ATCC 9150 / SARB42).